The following is a 283-amino-acid chain: Dihydropteroate synthase type-1 (283 aa).

A Pterin-binding domain is found at 6–262 (VTVFGILNLT…APGDLRSAIT (257 aa)). Asparagine 13 serves as a coordination point for Mg(2+). (7,8-dihydropterin-6-yl)methyl diphosphate-binding positions include aspartate 86, asparagine 105, aspartate 177, lysine 216, and 250–252 (RTH).

The protein belongs to the DHPS family. As to quaternary structure, homodimer or homotrimer. It depends on Mg(2+) as a cofactor.

The catalysed reaction is (7,8-dihydropterin-6-yl)methyl diphosphate + 4-aminobenzoate = 7,8-dihydropteroate + diphosphate. It functions in the pathway cofactor biosynthesis; tetrahydrofolate biosynthesis; 7,8-dihydrofolate from 2-amino-4-hydroxy-6-hydroxymethyl-7,8-dihydropteridine diphosphate and 4-aminobenzoate: step 1/2. Catalyzes the condensation of para-aminobenzoate (pABA) with 6-hydroxymethyl-7,8-dihydropterin diphosphate (DHPt-PP) to form 7,8-dihydropteroate (H2Pte), the immediate precursor of folate derivatives. Implicated in resistance to sulfonamide. The chain is Dihydropteroate synthase type-1 (sulI) from Mycolicibacterium fortuitum (Mycobacterium fortuitum).